The primary structure comprises 320 residues: Acyl-coenzyme A thioesterase 8 (320 aa).

Residues aspartate 233, serine 255, and glutamine 305 each act as charge relay system in the active site. The short motif at 318–320 (SKL) is the Microbody targeting signal element.

Belongs to the C/M/P thioester hydrolase family. Homodimer.

The protein resides in the peroxisome matrix. It carries out the reaction choloyl-CoA + H2O = cholate + CoA + H(+). The catalysed reaction is chenodeoxycholoyl-CoA + H2O = chenodeoxycholate + CoA + H(+). The enzyme catalyses acetyl-CoA + H2O = acetate + CoA + H(+). It catalyses the reaction butanoyl-CoA + H2O = butanoate + CoA + H(+). It carries out the reaction hexanoyl-CoA + H2O = hexanoate + CoA + H(+). The catalysed reaction is octanoyl-CoA + H2O = octanoate + CoA + H(+). The enzyme catalyses decanoyl-CoA + H2O = decanoate + CoA + H(+). It catalyses the reaction dodecanoyl-CoA + H2O = dodecanoate + CoA + H(+). It carries out the reaction tetradecanoyl-CoA + H2O = tetradecanoate + CoA + H(+). The catalysed reaction is 4,8-dimethylnonanoyl-CoA + H2O = 4,8-dimethylnonanoate + CoA + H(+). The enzyme catalyses 2,6-dimethylheptanoyl-CoA + H2O = 2,6-dimethylheptanoate + CoA + H(+). It catalyses the reaction malonyl-CoA + H2O = malonate + CoA + H(+). It carries out the reaction acetoacetyl-CoA + H2O = acetoacetate + CoA + H(+). The catalysed reaction is propanoyl-CoA + H2O = propanoate + CoA + H(+). The enzyme catalyses succinyl-CoA + H2O = succinate + CoA + H(+). It catalyses the reaction glutaryl-CoA + H2O = glutarate + CoA + H(+). It carries out the reaction hexanedioyl-CoA + H2O = hexanedioate + CoA + H(+). The catalysed reaction is octanedioyl-CoA + H2O = octanedioate + CoA + H(+). The enzyme catalyses decanedioyl-CoA + H2O = decanedioate + CoA + H(+). It catalyses the reaction dodecanedioyl-CoA + H2O = dodecanedioate + CoA + H(+). It carries out the reaction (9Z)-tetradecenoyl-CoA + H2O = (9Z)-tetradecenoate + CoA + H(+). The catalysed reaction is hexadecanoyl-CoA + H2O = hexadecanoate + CoA + H(+). The enzyme catalyses (9Z)-hexadecenoyl-CoA + H2O = (9Z)-hexadecenoate + CoA + H(+). It catalyses the reaction octadecanoyl-CoA + H2O = octadecanoate + CoA + H(+). It carries out the reaction (9Z)-octadecenoyl-CoA + H2O = (9Z)-octadecenoate + CoA + H(+). The catalysed reaction is (9Z,12Z)-octadecadienoyl-CoA + H2O = (9Z,12Z)-octadecadienoate + CoA + H(+). The enzyme catalyses eicosanoyl-CoA + H2O = eicosanoate + CoA + H(+). It catalyses the reaction (5Z,8Z,11Z,14Z)-eicosatetraenoyl-CoA + H2O = (5Z,8Z,11Z,14Z)-eicosatetraenoate + CoA + H(+). It carries out the reaction (3S)-3-hydroxy-3-methylglutaryl-CoA + H2O = 3-hydroxy-3-methylglutarate + CoA + H(+). The catalysed reaction is 3alpha,7alpha,12alpha-trihydroxy-5beta-cholestan-26-oyl-CoA + H2O = 3alpha,7alpha,12alpha-trihydroxy-5beta-cholestan-26-oate + CoA + H(+). The enzyme catalyses 2-methyloctadecanoyl-CoA + H2O = 2-methyloctadecanoate + CoA + H(+). It catalyses the reaction prostaglandin F2alpha-CoA + H2O = prostaglandin F2alpha + CoA + H(+). Inhibited by CoASH (IC(50)=10-15 uM). Also inhibited by cysteine-reactive agents. Functionally, catalyzes the hydrolysis of acyl-CoAs into free fatty acids and coenzyme A (CoASH), regulating their respective intracellular levels. Displays no strong substrate specificity with respect to the carboxylic acid moiety of Acyl-CoAs. Hydrolyzes medium length (C2 to C20) straight-chain, saturated and unsaturated acyl-CoAS but is inactive towards substrates with longer aliphatic chains. Moreover, it catalyzes the hydrolysis of CoA esters of bile acids, such as choloyl-CoA and chenodeoxycholoyl-CoA and competes with bile acid CoA:amino acid N-acyltransferase (BAAT). Is also able to hydrolyze CoA esters of dicarboxylic acids. It is involved in the metabolic regulation of peroxisome proliferation. This chain is Acyl-coenzyme A thioesterase 8 (Acot8), found in Rattus norvegicus (Rat).